The primary structure comprises 389 residues: MDLYEYQAKELFASHGVPTLPGSVATDSDGAKAAAEQLGGPVVVKAQVKTGGRGKAGGVKLAENPDEAKTKAEAILGLDIKGHITRRVLITTASDIVDEYYFSFLLDRANRNFLAMASVEGGMEIEEVAATKPEALAKIAIDPIQGVDEAKAREIVDAAKFPAEIADQVVEVVVKLWETFVAEDATLVEINPLVKDPQGKIIALDGKVTLDENASFRQPKQAELVDKDAEDPLEAKAKAKDLNYVKLDGEVGIIGNGAGLVMSTLDVVAYAGEKHNGVKPANFLDIGGGASAEVMAAGLDVILGDPAVKSVFVNVFGGITACDAVANGIVQALKILGDEATKPLVVRLDGNNVEEGRRILAEANHPAVTMVDTMDGAADKAAELAAAGA.

One can recognise an ATP-grasp domain in the interval 9 to 236 (KELFASHGVP…KDAEDPLEAK (228 aa)). Residues Lys-45, 52 to 54 (GRG), Ser-94, and Glu-99 each bind ATP. Mg(2+)-binding residues include Asn-191 and Asp-205. Residues Asn-256 and 318 to 320 (GIT) contribute to the substrate site.

Belongs to the succinate/malate CoA ligase beta subunit family. In terms of assembly, heterotetramer of two alpha and two beta subunits. The cofactor is Mg(2+).

It catalyses the reaction succinate + ATP + CoA = succinyl-CoA + ADP + phosphate. The enzyme catalyses GTP + succinate + CoA = succinyl-CoA + GDP + phosphate. It participates in carbohydrate metabolism; tricarboxylic acid cycle; succinate from succinyl-CoA (ligase route): step 1/1. Its function is as follows. Succinyl-CoA synthetase functions in the citric acid cycle (TCA), coupling the hydrolysis of succinyl-CoA to the synthesis of either ATP or GTP and thus represents the only step of substrate-level phosphorylation in the TCA. The beta subunit provides nucleotide specificity of the enzyme and binds the substrate succinate, while the binding sites for coenzyme A and phosphate are found in the alpha subunit. This chain is Succinate--CoA ligase [ADP-forming] subunit beta, found in Saccharopolyspora erythraea (strain ATCC 11635 / DSM 40517 / JCM 4748 / NBRC 13426 / NCIMB 8594 / NRRL 2338).